The primary structure comprises 492 residues: Glycylpeptide N-tetradecanoyltransferase 2 (492 aa).

Positions 1 to 77 (MAEDSESAAS…SASDSQEIKN (77 aa)) are disordered. Residues 15 to 32 (ELDDQDTCGIDGDNEEEN) show a composition bias toward acidic residues. Residues 46–57 (KKKKKKQKRKKE) show a composition bias toward basic residues. Positions 61–72 (SGGTKSDSASDS) are enriched in polar residues. His111, Trp116, Leu244, Val246, Ser252, Arg254, Val255, and Ala256 together coordinate tetradecanoyl-CoA.

It belongs to the NMT family.

Its subcellular location is the cytoplasm. It localises to the membrane. It catalyses the reaction N-terminal glycyl-[protein] + tetradecanoyl-CoA = N-tetradecanoylglycyl-[protein] + CoA + H(+). The enzyme catalyses N-terminal glycyl-L-lysyl-[protein] + tetradecanoyl-CoA = N-terminal glycyl-(N(6)-tetradecanoyl)-L-lysyl-[protein] + CoA + H(+). In terms of biological role, adds a myristoyl group to the N-terminal glycine residue of certain cellular and viral proteins. Also able to mediate N-terminal lysine myristoylation of proteins. The chain is Glycylpeptide N-tetradecanoyltransferase 2 from Danio rerio (Zebrafish).